Consider the following 320-residue polypeptide: uncharacterized protein (320 aa).

As to quaternary structure, interacts with VP1054, VP39 and VP80.

The protein resides in the virion. The protein localises to the host nucleus. It is found in the host cytoplasm. Functionally, plays a role in nucleocapsid assembly and is essential for viral replication. Distributed over the cylindrical capsid sheath of nucleocapsid. This is an uncharacterized protein from Lepidoptera (butterflies and moths).